Reading from the N-terminus, the 1324-residue chain is DNA-directed RNA polymerase subunit beta' (1324 aa).

The Zn(2+) site is built by Cys-219, Cys-292, Cys-299, and Cys-302. The segment at 1293-1324 (ARDFEFASSDVEEDELTEEDDDYGDEEEEDAF) is disordered. Positions 1302–1324 (DVEEDELTEEDDDYGDEEEEDAF) are enriched in acidic residues.

This sequence belongs to the RNA polymerase beta' chain family. RpoC2 subfamily. As to quaternary structure, in cyanobacteria the RNAP catalytic core is composed of 2 alpha, 1 beta, 1 beta', 1 gamma and 1 omega subunit. When a sigma factor is associated with the core the holoenzyme is formed, which can initiate transcription. It depends on Zn(2+) as a cofactor.

It catalyses the reaction RNA(n) + a ribonucleoside 5'-triphosphate = RNA(n+1) + diphosphate. DNA-dependent RNA polymerase catalyzes the transcription of DNA into RNA using the four ribonucleoside triphosphates as substrates. The sequence is that of DNA-directed RNA polymerase subunit beta' from Thermosynechococcus vestitus (strain NIES-2133 / IAM M-273 / BP-1).